Consider the following 203-residue polypeptide: MSQLTLTLLMIVSAYLAGSISSAVLVCRMRGLPDPRSEGSGNPGATNVLRIGGASSAAMVLFFDMLKGALPTYLAYLMGIDAISLGLIAIAACLGHIYPIFFGFKGGKGVATAFGAMAPIGDDLAICLMASWVVLLLISRYSSLAAIITALLAPLYTWWLDERFTIPVAMLSTLIIIRHKDNIQRLLKGEESKVSRKKRPKNP.

Helical transmembrane passes span 6 to 26 (LTLL…AVLV), 82 to 102 (AISL…PIFF), 118 to 138 (APIG…LLLI), and 141 to 161 (YSSL…WWLD).

This sequence belongs to the PlsY family. Probably interacts with PlsX.

It is found in the cell inner membrane. The enzyme catalyses an acyl phosphate + sn-glycerol 3-phosphate = a 1-acyl-sn-glycero-3-phosphate + phosphate. It participates in lipid metabolism; phospholipid metabolism. Functionally, catalyzes the transfer of an acyl group from acyl-phosphate (acyl-PO(4)) to glycerol-3-phosphate (G3P) to form lysophosphatidic acid (LPA). This enzyme utilizes acyl-phosphate as fatty acyl donor, but not acyl-CoA or acyl-ACP. This Shewanella putrefaciens (strain CN-32 / ATCC BAA-453) protein is Glycerol-3-phosphate acyltransferase.